Reading from the N-terminus, the 532-residue chain is CTP synthase (532 aa).

An amidoligase domain region spans residues 1–267 (MTKFIFVTGG…DDIVLKILGL (267 aa)). Residue S13 participates in CTP binding. S13 serves as a coordination point for UTP. ATP is bound at residue 14–19 (SLGKGI). Position 54 (Y54) interacts with L-glutamine. ATP is bound at residue D71. 2 residues coordinate Mg(2+): D71 and E141. CTP contacts are provided by residues 148–150 (DIE), 188–193 (KTKPTQ), and K224. UTP contacts are provided by residues 188–193 (KTKPTQ) and K224. Residues 292 to 532 (EIAIVGKYVE…EFVKATLANR (241 aa)) enclose the Glutamine amidotransferase type-1 domain. An L-glutamine-binding site is contributed by G354. C381 (nucleophile; for glutamine hydrolysis) is an active-site residue. L-glutamine contacts are provided by residues 382-385 (LGMQ), E405, and R462. Active-site residues include H507 and E509.

The protein belongs to the CTP synthase family. Homotetramer.

The catalysed reaction is UTP + L-glutamine + ATP + H2O = CTP + L-glutamate + ADP + phosphate + 2 H(+). It carries out the reaction L-glutamine + H2O = L-glutamate + NH4(+). The enzyme catalyses UTP + NH4(+) + ATP = CTP + ADP + phosphate + 2 H(+). It functions in the pathway pyrimidine metabolism; CTP biosynthesis via de novo pathway; CTP from UDP: step 2/2. Its activity is regulated as follows. Allosterically activated by GTP, when glutamine is the substrate; GTP has no effect on the reaction when ammonia is the substrate. The allosteric effector GTP functions by stabilizing the protein conformation that binds the tetrahedral intermediate(s) formed during glutamine hydrolysis. Inhibited by the product CTP, via allosteric rather than competitive inhibition. Functionally, catalyzes the ATP-dependent amination of UTP to CTP with either L-glutamine or ammonia as the source of nitrogen. Regulates intracellular CTP levels through interactions with the four ribonucleotide triphosphates. The sequence is that of CTP synthase from Desulfitobacterium hafniense (strain Y51).